The following is a 242-amino-acid chain: Probable transcriptional regulatory protein LBA0733 (242 aa).

A disordered region spans residues 1 to 22 (MSGHSKWHNIQGRKNAQDAKRG).

It belongs to the TACO1 family.

It localises to the cytoplasm. The polypeptide is Probable transcriptional regulatory protein LBA0733 (Lactobacillus acidophilus (strain ATCC 700396 / NCK56 / N2 / NCFM)).